Consider the following 508-residue polypeptide: Abl interactor 1 (508 aa).

The residue at position 2 (alanine 2) is an N-acetylalanine. The tract at residues 18-79 (ALIESYQNLT…NNVLQLLDIQ (62 aa)) is required for binding to WASF1. Residues 45–107 (KALEETKAYT…DIHKEKVARR (63 aa)) enclose the t-SNARE coiled-coil homology domain. A Phosphotyrosine modification is found at tyrosine 53. Disordered regions lie at residues 159–290 (KHGN…APPL), 306–375 (APGS…LTPQ), and 388–421 (NIAD…PVDY). Residues 161-175 (GNNQPARTGTLSRTN) show a composition bias toward polar residues. Phosphothreonine occurs at positions 174 and 178. Phosphoserine occurs at positions 183 and 187. The residue at position 213 (tyrosine 213) is a Phosphotyrosine; by ABL1. At threonine 215 the chain carries Phosphothreonine. 3 positions are modified to phosphoserine: serine 216, serine 222, and serine 225. Residues 222 to 235 (SQHSPGRTASLNQR) show a composition bias toward polar residues. Residues 248–258 (SRENSGSSSIG) show a composition bias toward low complexity. A compositionally biased stretch (pro residues) spans 278 to 290 (VPPPSGAPPAPPL). Residues 307 to 322 (PGSQYGTMTRQISRHN) are compositionally biased toward polar residues. A phosphoserine mark is found at serine 319 and serine 323. Residues 337–347 (PSVTAQFSAQP) are compositionally biased toward polar residues. Pro residues-rich tracts occupy residues 393–403 (PTPPPPPPPDD) and 410–419 (SPPPPPPPPV). The 60-residue stretch at 446 to 505 (NYIEKVVAIYDYTKDKDDELSFMEGAIIYVIKKNDDGWYEGVCNRVTGLFPGNYVESIMH) folds into the SH3 domain. Tyrosine 455 carries the post-translational modification Phosphotyrosine. Residue serine 466 is modified to Phosphoserine. Position 507 is a phosphothreonine (threonine 507).

It belongs to the ABI family. Interacts with ABL1, ENAH, STX1A, SNAP25, VAMP2, EPS8, and through its N-terminus with WASF1. Part of a complex consisting of ABI1, STX1A and SNAP25. Part of a complex consisting of ABI1, EPS8 and SOS1. Interacts with SOS1, SOS2, GRB2, SPTA1 and the first SH3 domain of NCK1. Isoform 6 does not interact with NCK1. Component of the WAVE2 complex composed of ABI1, CYFIP1/SRA1, NCKAP1/NAP1 (NCKAP1l/HEM1 in hematopoietic cells) and WASF2/WAVE2. Interacts (via SH3 domain) with SHANK2 and SHANK3, but not SHANK1; the interaction is direct. Interacts with the heterodimer MYC:MAX; the interaction may enhance MYC:MAX transcriptional activity. Interacts with FNBP1L (via the SH3 domain), WASF2, and CDC42, but only in the presence of FNBP1L. As to quaternary structure, (Microbial infection) Interacts with human cytomegalovirus/HHV-5 protein UL135. In terms of processing, phosphorylated on tyrosine residues after serum stimulation or induction by v-Abl. Seems to be phosphorylated at Tyr-53 by ABL1, required for nuclear but not for synaptic localization. As to expression, widely expressed, with highest expression in brain.

Its subcellular location is the cytoplasm. It localises to the nucleus. The protein resides in the cell projection. The protein localises to the lamellipodium. It is found in the filopodium. Its subcellular location is the growth cone. It localises to the postsynaptic density. The protein resides in the cytoskeleton. In terms of biological role, may act in negative regulation of cell growth and transformation by interacting with nonreceptor tyrosine kinases ABL1 and/or ABL2. May play a role in regulation of EGF-induced Erk pathway activation. Involved in cytoskeletal reorganization and EGFR signaling. Together with EPS8 participates in transduction of signals from Ras to Rac. In vitro, a trimeric complex of ABI1, EPS8 and SOS1 exhibits Rac specific guanine nucleotide exchange factor (GEF) activity and ABI1 seems to act as an adapter in the complex. Regulates ABL1/c-Abl-mediated phosphorylation of ENAH. Recruits WASF1 to lamellipodia and there seems to regulate WASF1 protein level. In brain, seems to regulate the dendritic outgrowth and branching as well as to determine the shape and number of synaptic contacts of developing neurons. In Homo sapiens (Human), this protein is Abl interactor 1.